The primary structure comprises 1456 residues: Alpha-2-macroglobulin-like protein 1 (1456 aa).

The first 19 residues, 1-19 (MVPTILLSALLLHFTDVVA), serve as a signal peptide directing secretion. 3 N-linked (GlcNAc...) asparagine glycosylation sites follow: Asn-48, Asn-172, and Asn-868.

This sequence belongs to the protease inhibitor I39 (alpha-2-macroglobulin) family. As to quaternary structure, homotetramer; consists of two dimer pairs that are disulfide-linked. Part of a complex composed of complement component C3, CLCA1/CLCA3, A2ML1/OH and ALB/serum albumin.

The protein localises to the secreted. Its function is as follows. Inhibits protease gelatinolytic complex activity against type 1 collagen. The sequence is that of Alpha-2-macroglobulin-like protein 1 from Mus musculus (Mouse).